A 1888-amino-acid polypeptide reads, in one-letter code: Fatty acid synthase subunit alpha (1888 aa).

A disordered region spans residues 98–118 (DLAPVEEPNAEEQTGAAATPA). In terms of domain architecture, Carrier spans 146-221 (VKASLLLHVL…ETFQDTFAGS (76 aa)). Ser181 carries the O-(pantetheine 4'-phosphoryl)serine modification. A beta-ketoacyl reductase region spans residues 675 to 874 (DKYVLITGAG…CGAIIGWTRG (200 aa)). A Ketosynthase family 3 (KS3) domain is found at 1119 to 1657 (KQMIQEVVIE…QKGAQAVAVH (539 aa)). Catalysis depends on for beta-ketoacyl synthase activity residues Cys1305, His1542, and His1583. Positions 1774, 1775, and 1776 each coordinate Mg(2+). Acetyl-CoA is bound by residues 1774-1776 (DVE), Tyr1800, Ser1810, 1819-1829 (EAVFKSLGVKS), 1843-1846 (REAG), and 1873-1875 (ISH). Mg(2+) is bound by residues Ser1874 and His1875.

Belongs to the thiolase-like superfamily. Fungal fatty acid synthetase subunit alpha family. As to quaternary structure, fatty acid synthase is composed of alpha and beta subunits.

The catalysed reaction is acetyl-CoA + n malonyl-CoA + 2n NADPH + 4n H(+) = a long-chain-acyl-CoA + n CoA + n CO2 + 2n NADP(+).. It catalyses the reaction a fatty acyl-[ACP] + malonyl-[ACP] + H(+) = a 3-oxoacyl-[ACP] + holo-[ACP] + CO2. It carries out the reaction a (3R)-hydroxyacyl-[ACP] + NADP(+) = a 3-oxoacyl-[ACP] + NADPH + H(+). Fatty acid synthetase catalyzes the formation of long-chain fatty acids from acetyl-CoA, malonyl-CoA and NADPH. The alpha subunit contains domains for: acyl carrier protein, 3-oxoacyl-[acyl-carrier-protein] reductase, and 3-oxoacyl-[acyl-carrier-protein] synthase. In this species, higher amounts of C18 than C16 fatty acids are produced. The polypeptide is Fatty acid synthase subunit alpha (FAS2) (Lachancea kluyveri (Yeast)).